The chain runs to 107 residues: Large ribosomal subunit protein uL24 (107 aa).

This sequence belongs to the universal ribosomal protein uL24 family. As to quaternary structure, part of the 50S ribosomal subunit.

Its function is as follows. One of two assembly initiator proteins, it binds directly to the 5'-end of the 23S rRNA, where it nucleates assembly of the 50S subunit. Functionally, one of the proteins that surrounds the polypeptide exit tunnel on the outside of the subunit. This is Large ribosomal subunit protein uL24 from Caldanaerobacter subterraneus subsp. tengcongensis (strain DSM 15242 / JCM 11007 / NBRC 100824 / MB4) (Thermoanaerobacter tengcongensis).